The chain runs to 190 residues: Potassium-transporting ATPase KdpC subunit (190 aa).

Residues 10-30 (TFLFLLLITGGVYPLLTTALG) form a helical membrane-spanning segment.

The protein belongs to the KdpC family. As to quaternary structure, the system is composed of three essential subunits: KdpA, KdpB and KdpC.

The protein localises to the cell inner membrane. Functionally, part of the high-affinity ATP-driven potassium transport (or Kdp) system, which catalyzes the hydrolysis of ATP coupled with the electrogenic transport of potassium into the cytoplasm. This subunit acts as a catalytic chaperone that increases the ATP-binding affinity of the ATP-hydrolyzing subunit KdpB by the formation of a transient KdpB/KdpC/ATP ternary complex. This is Potassium-transporting ATPase KdpC subunit from Escherichia coli O81 (strain ED1a).